The primary structure comprises 202 residues: Glycerol-3-phosphate acyltransferase (202 aa).

The next 4 membrane-spanning stretches (helical) occupy residues 2 to 22, 82 to 102, 119 to 139, and 158 to 178; these read ANLL…AVVV, DTGL…PVFH, AIDP…AFFF, and VLMN…VLLI.

It belongs to the PlsY family. Probably interacts with PlsX.

It is found in the cell inner membrane. The enzyme catalyses an acyl phosphate + sn-glycerol 3-phosphate = a 1-acyl-sn-glycero-3-phosphate + phosphate. It functions in the pathway lipid metabolism; phospholipid metabolism. Functionally, catalyzes the transfer of an acyl group from acyl-phosphate (acyl-PO(4)) to glycerol-3-phosphate (G3P) to form lysophosphatidic acid (LPA). This enzyme utilizes acyl-phosphate as fatty acyl donor, but not acyl-CoA or acyl-ACP. The polypeptide is Glycerol-3-phosphate acyltransferase (Cupriavidus taiwanensis (strain DSM 17343 / BCRC 17206 / CCUG 44338 / CIP 107171 / LMG 19424 / R1) (Ralstonia taiwanensis (strain LMG 19424))).